We begin with the raw amino-acid sequence, 151 residues long: ADFSDDRITECQEAFELFDRSAEGKVFLGQVGDILRALGQNPTNGDVTKVLGNPPKEELATKQVSFSEFLPMLAQIERQTEHGSYEDFVEGLRVFDKENNGKIMGAELRHVLSTLGEKMSEEEVEESLLQGQQDPNGCIHYEEFSKYLLEG.

Alanine 1 bears the N-acetylalanine mark. EF-hand domains follow at residues 6 to 41 (DRITECQEAFELFDRSAEGKVFLGQVGDILRALGQN), 83 to 118 (GSYEDFVEGLRVFDKENNGKIMGAELRHVLSTLGEK), and 119 to 151 (MSEEEVEESLLQGQQDPNGCIHYEEFSKYLLEG).

Its function is as follows. In molluscan muscle, calcium regulation is associated with myosin rather than with actin. Muscle myosin contains two types of light chains: the catalytic light chain, essential for ATPase activity, and the regulatory light chain, a calcium-binding protein responsible for Ca(2+) dependent binding and Ca(2+) dependent Mg-ATPase activity. This Halocynthia roretzi (Sea squirt) protein is Myosin catalytic light chain, smooth muscle.